The chain runs to 268 residues: tRNA pseudouridine synthase A (268 aa).

D52 (nucleophile) is an active-site residue. Y113 is a binding site for substrate.

Belongs to the tRNA pseudouridine synthase TruA family. In terms of assembly, homodimer.

It catalyses the reaction uridine(38/39/40) in tRNA = pseudouridine(38/39/40) in tRNA. Functionally, formation of pseudouridine at positions 38, 39 and 40 in the anticodon stem and loop of transfer RNAs. The polypeptide is tRNA pseudouridine synthase A (Rhizobium leguminosarum bv. trifolii (strain WSM2304)).